The sequence spans 108 residues: Movement protein TGB2 (108 aa).

At 1-14 the chain is on the cytoplasmic side; it reads MPLTPPPDHSITYR. The helical transmembrane segment at 15–31 threads the bilayer; that stretch reads ILAVGLCSCCAIYAATR. Over 32–67 the chain is Lumenal; sequence STLPHTGDNLHSLPYGGKYSDGTKSICYSGPGPTPD. Residues 68 to 85 form a helical membrane-spanning segment; the sequence is IPTHLPALLVLVLVVAIY. At 86–108 the chain is on the cytoplasmic side; sequence ASSRLDFSVNYRCSCRVHNRSGQ.

The protein belongs to the Tymovirales TGBp2 protein family.

It is found in the host endoplasmic reticulum membrane. Functionally, plays a role in viral cell-to-cell propagation, by facilitating genome transport to neighboring plant cells through plasmosdesmata,. The polypeptide is Movement protein TGB2 (Strawberry mild yellow edge-associated virus (SMYEaV)).